The sequence spans 268 residues: Glutamate 5-kinase (268 aa).

Residue Lys-15 participates in ATP binding. The substrate site is built by Ser-55, Asp-142, and Asn-158. 178–179 (SD) provides a ligand contact to ATP.

It belongs to the glutamate 5-kinase family.

It localises to the cytoplasm. It carries out the reaction L-glutamate + ATP = L-glutamyl 5-phosphate + ADP. It functions in the pathway amino-acid biosynthesis; L-proline biosynthesis; L-glutamate 5-semialdehyde from L-glutamate: step 1/2. Its function is as follows. Catalyzes the transfer of a phosphate group to glutamate to form L-glutamate 5-phosphate. This is Glutamate 5-kinase from Oenococcus oeni (strain ATCC BAA-331 / PSU-1).